The chain runs to 37 residues: Unknown protein 25 (37 aa).

This chain is Unknown protein 25, found in Pseudotsuga menziesii (Douglas-fir).